Reading from the N-terminus, the 516-residue chain is GMP synthase [glutamine-hydrolyzing] (516 aa).

Residues 5 to 199 (SIIVLDFGSQ…ARNICGVTEK (195 aa)) form the Glutamine amidotransferase type-1 domain. Cysteine 82 functions as the Nucleophile in the catalytic mechanism. Residues histidine 173 and glutamate 175 contribute to the active site. The region spanning 200-391 (WKMEHFLKEQ…LGLPESMINR (192 aa)) is the GMPS ATP-PPase domain. 227 to 233 (SGGVDSS) is an ATP binding site.

In terms of assembly, homodimer.

The enzyme catalyses XMP + L-glutamine + ATP + H2O = GMP + L-glutamate + AMP + diphosphate + 2 H(+). The protein operates within purine metabolism; GMP biosynthesis; GMP from XMP (L-Gln route): step 1/1. Functionally, catalyzes the synthesis of GMP from XMP. In Sulfurimonas denitrificans (strain ATCC 33889 / DSM 1251) (Thiomicrospira denitrificans (strain ATCC 33889 / DSM 1251)), this protein is GMP synthase [glutamine-hydrolyzing].